Here is a 220-residue protein sequence, read N- to C-terminus: Guanylate kinase (220 aa).

One can recognise a Guanylate kinase-like domain in the interval 16 to 195 (GLMFVLSSPS…AFESVRSILR (180 aa)). 23-30 (SPSGAGKT) contacts ATP.

It belongs to the guanylate kinase family.

Its subcellular location is the cytoplasm. It carries out the reaction GMP + ATP = GDP + ADP. Functionally, essential for recycling GMP and indirectly, cGMP. This is Guanylate kinase from Rhodopseudomonas palustris (strain ATCC BAA-98 / CGA009).